Here is a 712-residue protein sequence, read N- to C-terminus: Ribosome-releasing factor 2, mitochondrial (712 aa).

A mitochondrion-targeting transit peptide spans 1-29 (MLRCAWQNGPRQSNRWLRHLSNQIWKRSY). In terms of domain architecture, tr-type G spans 31–310 (SKIRNIGILA…AVNSYLPAPE (280 aa)). Residues 40-47 (AHIDAGKT), 104-108 (DTPGH), and 158-161 (NKMD) contribute to the GTP site.

Belongs to the TRAFAC class translation factor GTPase superfamily. Classic translation factor GTPase family. EF-G/EF-2 subfamily.

The protein localises to the mitochondrion. Mitochondrial GTPase that mediates the disassembly of ribosomes from messenger RNA at the termination of mitochondrial protein biosynthesis. Not involved in the GTP-dependent ribosomal translocation step during translation elongation. This is Ribosome-releasing factor 2, mitochondrial from Drosophila yakuba (Fruit fly).